The following is a 273-amino-acid chain: Urease accessory protein UreD (273 aa).

The protein belongs to the UreD family. UreD, UreF and UreG form a complex that acts as a GTP-hydrolysis-dependent molecular chaperone, activating the urease apoprotein by helping to assemble the nickel containing metallocenter of UreC. The UreE protein probably delivers the nickel.

The protein resides in the cytoplasm. Required for maturation of urease via the functional incorporation of the urease nickel metallocenter. The chain is Urease accessory protein UreD from Rhizobium leguminosarum bv. trifolii (strain WSM2304).